Here is a 482-residue protein sequence, read N- to C-terminus: ATP synthase subunit beta (482 aa).

161 to 168 (GGAGVGKT) lines the ATP pocket.

This sequence belongs to the ATPase alpha/beta chains family. F-type ATPases have 2 components, CF(1) - the catalytic core - and CF(0) - the membrane proton channel. CF(1) has five subunits: alpha(3), beta(3), gamma(1), delta(1), epsilon(1). CF(0) has four main subunits: a(1), b(1), b'(1) and c(9-12).

The protein localises to the cellular thylakoid membrane. It catalyses the reaction ATP + H2O + 4 H(+)(in) = ADP + phosphate + 5 H(+)(out). Functionally, produces ATP from ADP in the presence of a proton gradient across the membrane. The catalytic sites are hosted primarily by the beta subunits. In Gloeothece citriformis (strain PCC 7424) (Cyanothece sp. (strain PCC 7424)), this protein is ATP synthase subunit beta.